A 123-amino-acid polypeptide reads, in one-letter code: Loki profilin-3 (123 aa).

It belongs to the Asgard profilin family.

It is found in the cytoplasm. The protein localises to the cytoskeleton. In terms of biological role, binds to actin and affects the structure of the cytoskeleton. At high concentrations inhibits spontaneous rabbit actin nucleation. This strongly suggests this archaea has a profilin-regulated actin system, and actin-type genes can be identified in this organism. The protein is Loki profilin-3 of Lokiarchaeum sp. (strain GC14_75).